Consider the following 371-residue polypeptide: Transcription termination/antitermination protein NusA (371 aa).

Residues 135–199 enclose the S1 motif domain; the sequence is EDIMTGIVQR…KGPQIYVSRT (65 aa). A KH domain is found at 301-367; it reads EKATTVIVPD…EPLFTEPETA (67 aa). Residues 347 to 371 are disordered; the sequence is GIYPRELEEDDEPLFTEPETAESDE. Residues 353-371 show a composition bias toward acidic residues; that stretch reads LEEDDEPLFTEPETAESDE.

Belongs to the NusA family. As to quaternary structure, monomer. Binds directly to the core enzyme of the DNA-dependent RNA polymerase and to nascent RNA.

It is found in the cytoplasm. Participates in both transcription termination and antitermination. This is Transcription termination/antitermination protein NusA from Bacillus subtilis (strain 168).